A 339-amino-acid polypeptide reads, in one-letter code: NmrA-like family domain-containing oxidoreductase cpsB (339 aa).

Residue Lys142 coordinates NADP(+).

Belongs to the NmrA-type oxidoreductase family.

It carries out the reaction didehydrocampesine A + 2 AH2 = campesine A + 2 A. It functions in the pathway alkaloid biosynthesis. Its function is as follows. Oxidoreductase; part of the gene cluster that mediates the biosynthesis of campesine G, a dimeric indole piperazine alkaloid that shows good insecticidal activity Galleria mellonella. Within the pathway, cpsB reduces the unstable (S,S)-trypyl-valyl dihydropiperazine (didehydrocampesine A) intermediate to (S, S)-trypyl-valyl-piperazine (campesine A) using two equivalents of NAD(P)H. The non-canonical non-ribosomal peptide synthetase cpsA catalyzes the first steps of the pathway by producing L-tryptophanal and L-valinal from their respective amino-acids. These products condensate spontaneously to form trypyl-valyl pyrazine also known as didehydrocampesine A. The NmrA-like family domain-containing oxidoreductase cpsB is the next enzyme in cps pathway and reduces the unstable didehydrocampesine A to campesine A. The methyltransferase cpsF and the acetyltransferase cpsE both recognize N13 of piperazine ring to carry out methylation and acetylation of campesine A to produce campesine C and B, respectively. The cytochrome P450 monooxygenase cpsD then acts as a dimerase that catalyzes oxidative heterocoupling between campesine B and C to produce heterodimers with unexpected 6/5/6/6/6/6/5/6 eight-ring scaffold called campesine D. Finally,the cytochrome P450 monooxygenase cpsC is a regioselective dehydrogenase that catalyzes dehydrogenation reaction towards C2-N1 to produce campesine G. In Aspergillus campestris (strain IBT 28561), this protein is NmrA-like family domain-containing oxidoreductase cpsB.